Here is a 469-residue protein sequence, read N- to C-terminus: Glutamate--tRNA ligase (469 aa).

Residues 11–21 (PSPTGFIHLGN) carry the 'HIGH' region motif. A compositionally biased stretch (basic and acidic residues) spans 118–131 (GEKPRYDGTWRPEP). Residues 118 to 138 (GEKPRYDGTWRPEPGKVLPEP) are disordered. The short motif at 243-247 (KMSKR) is the 'KMSKS' region element. Lys-246 serves as a coordination point for ATP.

Belongs to the class-I aminoacyl-tRNA synthetase family. Glutamate--tRNA ligase type 1 subfamily. In terms of assembly, monomer.

The protein localises to the cytoplasm. The catalysed reaction is tRNA(Glu) + L-glutamate + ATP = L-glutamyl-tRNA(Glu) + AMP + diphosphate. Its function is as follows. Catalyzes the attachment of glutamate to tRNA(Glu) in a two-step reaction: glutamate is first activated by ATP to form Glu-AMP and then transferred to the acceptor end of tRNA(Glu). The protein is Glutamate--tRNA ligase of Burkholderia vietnamiensis (strain G4 / LMG 22486) (Burkholderia cepacia (strain R1808)).